A 177-amino-acid chain; its full sequence is Bifunctional protein PyrR (177 aa).

The PRPP-binding motif lies at 99–111; the sequence is VILIDDVLYTGRT.

It belongs to the purine/pyrimidine phosphoribosyltransferase family. PyrR subfamily. As to quaternary structure, homodimer and homohexamer; in equilibrium.

It carries out the reaction UMP + diphosphate = 5-phospho-alpha-D-ribose 1-diphosphate + uracil. Its function is as follows. Regulates transcriptional attenuation of the pyrimidine nucleotide (pyr) operon by binding in a uridine-dependent manner to specific sites on pyr mRNA. This disrupts an antiterminator hairpin in the RNA and favors formation of a downstream transcription terminator, leading to a reduced expression of downstream genes. Also displays a weak uracil phosphoribosyltransferase activity which is not physiologically significant. This Pediococcus pentosaceus (strain ATCC 25745 / CCUG 21536 / LMG 10740 / 183-1w) protein is Bifunctional protein PyrR.